The chain runs to 215 residues: Orotate phosphoribosyltransferase (215 aa).

K26 serves as a coordination point for 5-phospho-alpha-D-ribose 1-diphosphate. Residue 34-35 coordinates orotate; the sequence is FF. 5-phospho-alpha-D-ribose 1-diphosphate-binding positions include 72-73, R99, K100, K103, H105, and 124-132; these read YK and DDVITAGTA. Orotate contacts are provided by T128 and R156.

It belongs to the purine/pyrimidine phosphoribosyltransferase family. PyrE subfamily. In terms of assembly, homodimer. Requires Mg(2+) as cofactor.

It catalyses the reaction orotidine 5'-phosphate + diphosphate = orotate + 5-phospho-alpha-D-ribose 1-diphosphate. The protein operates within pyrimidine metabolism; UMP biosynthesis via de novo pathway; UMP from orotate: step 1/2. Functionally, catalyzes the transfer of a ribosyl phosphate group from 5-phosphoribose 1-diphosphate to orotate, leading to the formation of orotidine monophosphate (OMP). The protein is Orotate phosphoribosyltransferase of Yersinia pseudotuberculosis serotype O:1b (strain IP 31758).